The chain runs to 354 residues: Uroporphyrinogen decarboxylase (354 aa).

Substrate contacts are provided by residues 27-31 (RQAGR), Asp77, Tyr154, Thr209, and His327.

This sequence belongs to the uroporphyrinogen decarboxylase family. As to quaternary structure, homodimer.

The protein resides in the cytoplasm. The enzyme catalyses uroporphyrinogen III + 4 H(+) = coproporphyrinogen III + 4 CO2. The protein operates within porphyrin-containing compound metabolism; protoporphyrin-IX biosynthesis; coproporphyrinogen-III from 5-aminolevulinate: step 4/4. In terms of biological role, catalyzes the decarboxylation of four acetate groups of uroporphyrinogen-III to yield coproporphyrinogen-III. This is Uroporphyrinogen decarboxylase from Klebsiella pneumoniae (strain 342).